The following is a 216-amino-acid chain: MDASPKYTGVRKRKWGKWVAEIRLPNSRDRIWLGSFDSAEKAARAFDAALYCLRGPGARFNFPDNPPEIPGGRSLTPQQIQVVASRFACEEELLPPEQHHPSPPRGDHNTEEEVIISARGEINSGSGGPTLGQVGEDNNNEGNSNDTSSYWPLIWEEENFVGPPNSDHEFGFFTDDSTNLYFPTQQQQQHQLSSDFYYDGACEDDFSHYNINLWNF.

The AP2/ERF DNA-binding region spans 6-63; sequence KYTGVRKRKWGKWVAEIRLPNSRDRIWLGSFDSAEKAARAFDAALYCLRGPGARFNFP. Residues 121 to 145 form a disordered region; it reads EINSGSGGPTLGQVGEDNNNEGNSN. Positions 135-145 are enriched in low complexity; the sequence is GEDNNNEGNSN.

The protein belongs to the AP2/ERF transcription factor family. ERF subfamily.

It localises to the nucleus. Functionally, probably acts as a transcriptional activator. Binds to the GCC-box pathogenesis-related promoter element. May be involved in the regulation of gene expression by stress factors and by components of stress signal transduction pathways. The chain is Ethylene-responsive transcription factor ERF016 (ERF016) from Arabidopsis thaliana (Mouse-ear cress).